We begin with the raw amino-acid sequence, 196 residues long: Probable GTP-binding protein EngB (196 aa).

Positions 22–194 (DKKEIAFAGR…LKTIGEILGD (173 aa)) constitute an EngB-type G domain. Residues 30 to 37 (GRSNVGKS), 56 to 60 (GKTRS), 74 to 77 (DLPG), 141 to 144 (TKSD), and 173 to 175 (FSS) each bind GTP. Mg(2+)-binding residues include serine 37 and threonine 58.

The protein belongs to the TRAFAC class TrmE-Era-EngA-EngB-Septin-like GTPase superfamily. EngB GTPase family. Requires Mg(2+) as cofactor.

In terms of biological role, necessary for normal cell division and for the maintenance of normal septation. The polypeptide is Probable GTP-binding protein EngB (Petrotoga mobilis (strain DSM 10674 / SJ95)).